Consider the following 229-residue polypeptide: 23 kDa piroplasm membrane protein (229 aa).

The signal sequence occupies residues 1–19 (MNKYFKVFFFVLLTHALKS). At 20–203 (ALIFGQATLQ…EKEDTNKKKY (184 aa)) the chain is on the extracellular side. The helical transmembrane segment at 204-224 (VLMVVVVVVFVVVASLVVFLV) threads the bilayer. Residues 225–229 (KFCLK) lie on the Cytoplasmic side of the membrane.

The protein localises to the membrane. The protein is 23 kDa piroplasm membrane protein of Theileria parva (East coast fever infection agent).